The primary structure comprises 1116 residues: Rho GTPase-activating protein 45 (1116 aa).

The disordered stretch occupies residues 1-72 (MFSRKKRELM…RPTSLSRHAS (72 aa)). Residues 22-31 (GSPNPQSSSG) show a composition bias toward polar residues. S23, S72, S92, and S98 each carry phosphoserine. In terms of domain architecture, F-BAR spans 268 to 538 (EEVDMLLQRC…SSKLYDPGQQ (271 aa)). The stretch at 375–498 (EHERRRKEIK…QIQEVIRQSD (124 aa)) forms a coiled coil. A disordered region spans residues 422–457 (VAKAEEEQQGTGPGAGTAASKALDKRRRLEEEAKNK). Residues 448–457 (RRLEEEAKNK) are compositionally biased toward basic and acidic residues. 4 positions are modified to phosphoserine: S568, S577, S591, and S618. Residues 569–658 (PIMRTRKGSF…MSSSEELGDQ (90 aa)) are disordered. Residues 621–635 (ISISDTEVGLDTSSG) show a composition bias toward polar residues. The span at 643–652 (TSSSGTMSSS) shows a compositional bias: low complexity. The Phorbol-ester/DAG-type zinc-finger motif lies at 699-744 (THRLRKLRTPAKCRECNSYVYFQGAECEECCLACHKKCLETLAIQC). A Rho-GAP domain is found at 758–971 (QDFSQAALST…TLIVHYGLVF (214 aa)). S946, S1017, S1020, and S1022 each carry phosphoserine. 2 disordered regions span residues 1004–1035 (EEAE…SSSD) and 1050–1116 (AGLE…PQFV). Polar residues-rich tracts occupy residues 1080–1090 (FNTNQSNNTSR) and 1105–1116 (GGTSQERQPQFV).

The protein localises to the cytoplasm. It localises to the cell projection. It is found in the ruffle membrane. Functionally, contains a GTPase activator for the Rho-type GTPases (RhoGAP) domain that would be able to negatively regulate the actin cytoskeleton as well as cell spreading. However, also contains N-terminally a BAR-domin which is able to play an autoinhibitory effect on this RhoGAP activity. This is Rho GTPase-activating protein 45 from Mus musculus (Mouse).